A 159-amino-acid chain; its full sequence is Peptide methionine sulfoxide reductase MsrB (159 aa).

Residues 22–144 (RERLEANLTA…NSVSLQFVKA (123 aa)) enclose the MsrB domain. Zn(2+)-binding residues include Cys61, Cys64, Cys110, and Cys113. The Nucleophile role is filled by Cys133.

Belongs to the MsrB Met sulfoxide reductase family. The cofactor is Zn(2+).

It catalyses the reaction L-methionyl-[protein] + [thioredoxin]-disulfide + H2O = L-methionyl-(R)-S-oxide-[protein] + [thioredoxin]-dithiol. The protein is Peptide methionine sulfoxide reductase MsrB of Caulobacter vibrioides (strain ATCC 19089 / CIP 103742 / CB 15) (Caulobacter crescentus).